Consider the following 175-residue polypeptide: MGKITFFEDRGFQGRCYECSSDCPNLQTYFSRCNSVRVDSGCWMLYERPNYQGHQYFLRRGDYPDYQQWMGFSDSIRSCRLIPQHSGTYRMRIYERDDFRGQMSEITDDCLSLQDRFHLSEIHSLNVMEGCWVLYEMPSYRGRQYLLRPGEYRRYLDWGAANAKVGSFRRVMDFY.

2 consecutive Beta/gamma crystallin 'Greek key' domains span residues 2 to 40 (GKIT…RVDS) and 41 to 83 (GCWM…RLIP). The connecting peptide stretch occupies residues 84–88 (QHSGT). 2 consecutive Beta/gamma crystallin 'Greek key' domains span residues 89 to 129 (YRMR…NVME) and 130 to 172 (GCWV…RRVM).

This sequence belongs to the beta/gamma-crystallin family.

Crystallins are the dominant structural components of the vertebrate eye lens. The chain is Gamma-crystallin B (Crygb) from Rattus norvegicus (Rat).